A 113-amino-acid chain; its full sequence is Cytochrome c (113 aa).

Residues Cys21, Cys24, His25, and Met90 each coordinate heme c.

Belongs to the cytochrome c family. Post-translationally, binds 1 heme c group covalently per subunit.

It localises to the mitochondrion intermembrane space. In terms of biological role, electron carrier protein. The oxidized form of the cytochrome c heme group can accept an electron from the heme group of the cytochrome c1 subunit of cytochrome reductase. Cytochrome c then transfers this electron to the cytochrome oxidase complex, the final protein carrier in the mitochondrial electron-transport chain. This chain is Cytochrome c (cytC), found in Dictyostelium discoideum (Social amoeba).